The sequence spans 105 residues: Secreted effector protein PINE1 (105 aa).

Residues 1–21 (MKLSQPLSIFAILAASTVAVA) form the signal peptide.

Interacts with Arabidopsis thaliana PGIP1.

It localises to the secreted. In terms of biological role, effector protein required for full virulence. Directly interacts with and functionally inactivates PG-inhibiting proteins (PGIPs). PGIPs are a defense mechanism of infected plants, that inhibit the plant pathogens secreted polygalacturonases (PGs) used to degrade the plant cell wall. Excerts its function by interacting with host PGIPs to negate their polygalacturonase-inhibiting function via enhanced dissociation of PGIPs from PGs. The polypeptide is Secreted effector protein PINE1 (Sclerotinia sclerotiorum (strain ATCC 18683 / 1980 / Ss-1) (White mold)).